A 229-amino-acid polypeptide reads, in one-letter code: Somatolactin (229 aa).

A signal peptide spans 1 to 21 (MAALQEVLLAVLLWPVLVTIS). Intrachain disulfides connect cysteine 26-cysteine 36, cysteine 87-cysteine 203, and cysteine 220-cysteine 228. N-linked (GlcNAc...) asparagine glycosylation occurs at asparagine 143.

Belongs to the somatotropin/prolactin family. Pituitary gland.

The protein localises to the secreted. The chain is Somatolactin from Tetraodon miurus (Congo puffer).